A 345-amino-acid polypeptide reads, in one-letter code: MRLSDFDFALPEGLVAQAPVTPRDASRLMVLAPGEGAPAHRGFADLPELLAPGDLLVFNDTRVIPARLLGHKASGGKVELLLCEPLEGGLGRRWRAMGQASKPIREGAVLAFDGLEARVDAVEGEGFYRVTLDRQGAELEAALGRAGRIPLPPYIRRAPDAEDAARYQTIWARAPGSAAAPTAGLHFTEPLLARLAARGVRRTAVTLHVGPGTFLPIRGDDLDAHRMHGERYEVSPAAAAELAAARARGGRIVAVGTTSVRTLESAWRDGEVAPGPGRTELFIRPGHPFRAVDAMVTNFHLPRSTLLVLVCAFGGQGRVLAAYREAVARGYRFFSYGDAMLLLRR.

It belongs to the QueA family. As to quaternary structure, monomer.

The protein resides in the cytoplasm. The enzyme catalyses 7-aminomethyl-7-carbaguanosine(34) in tRNA + S-adenosyl-L-methionine = epoxyqueuosine(34) in tRNA + adenine + L-methionine + 2 H(+). It functions in the pathway tRNA modification; tRNA-queuosine biosynthesis. Transfers and isomerizes the ribose moiety from AdoMet to the 7-aminomethyl group of 7-deazaguanine (preQ1-tRNA) to give epoxyqueuosine (oQ-tRNA). The sequence is that of S-adenosylmethionine:tRNA ribosyltransferase-isomerase from Anaeromyxobacter dehalogenans (strain 2CP-C).